We begin with the raw amino-acid sequence, 1089 residues long: Ankyrin repeat and IBR domain-containing protein 1 (1089 aa).

Gly-2 carries N-myristoyl glycine lipidation. ANK repeat units follow at residues 45–74 (QHNT…NPNK) and 144–173 (KKNT…DLFA). Residues 281–321 (CQRSGVQMPTPPPSGYNAWDTLPSPRTPRTTRSSVTSPDEI) are disordered. Low complexity predominate over residues 303–318 (PSPRTPRTTRSSVTSP). Residues 329 to 569 (DTSLCDICMC…GGYYRCTRYE (241 aa)) form a TRIAD supradomain region. Positions 333, 336, 351, 353, 356, 359, 378, 383, 465, 468, 473, 478, 519, and 522 each coordinate Zn(2+). The segment at 333–383 (CDICMCSISVFEDPVDMPCGHDFCRGCWESFLNLKIQEGEAHNIFCPAYDC) adopts an RING-type 1 zinc-finger fold. The IBR-type zinc finger occupies 401–478 (DKRYLQFDIK…LGEAHEPCDC (78 aa)). Residues 519–548 (CANCKSPIQKNEGCNHMQCAKCKYDFCWIC) form an RING-type 2; atypical zinc finger. Cys-532 is an active-site residue. Zn(2+) contacts are provided by Cys-537, Cys-540, Cys-545, Cys-548, His-555, and Cys-565. Residues 575 to 640 (EEQSKEMTVE…RALKETEGGC (66 aa)) are a coiled coil. Ser-737 bears the Phosphoserine mark. The tract at residues 776 to 821 (RRGDVHSLLSNPPDPDEPSESTLDIPEGGSSSRRPGTSVVSSASMS) is disordered. The UIM domain maps to 851 to 870 (EDDPNILLAIQLSLQESGLA). Phosphoserine occurs at positions 884 and 911. Disordered regions lie at residues 889-912 (GTSL…ALSS), 927-964 (AEND…QDPN), and 1026-1089 (DASV…VHLV). 2 stretches are compositionally biased toward polar residues: residues 931 to 941 (PFSTDTLSSHP) and 1070 to 1082 (DVSS…SSDW).

Belongs to the RBR family.

The catalysed reaction is [E2 ubiquitin-conjugating enzyme]-S-ubiquitinyl-L-cysteine + [acceptor protein]-L-lysine = [E2 ubiquitin-conjugating enzyme]-L-cysteine + [acceptor protein]-N(6)-ubiquitinyl-L-lysine.. Functionally, might act as an E3 ubiquitin-protein ligase, or as part of E3 complex, which accepts ubiquitin from specific E2 ubiquitin-conjugating enzymes and then transfers it to substrates. The protein is Ankyrin repeat and IBR domain-containing protein 1 (ANKIB1) of Homo sapiens (Human).